The chain runs to 581 residues: Terpene synthase 2, chloroplastic (581 aa).

A chloroplast-targeting transit peptide spans 1–34 (MYSLPGATMSAAPASIISSSSFVEPLLLAAASPA). Substrate contacts are provided by R299, D336, D340, and R480. Residues D336 and D340 each contribute to the Mg(2+) site. The DDXXD motif signature appears at 336–340 (DDIFD). Residues D483, S487, and E491 each contribute to the Mg(2+) site.

Belongs to the terpene synthase family. In terms of assembly, monomer. Requires Mg(2+) as cofactor.

Its subcellular location is the plastid. The protein resides in the chloroplast. It catalyses the reaction (2E,6E)-farnesyl diphosphate + H2O = (3S,6E)-nerolidol + diphosphate. The enzyme catalyses (2E,6E,10E)-geranylgeranyl diphosphate + H2O = (6E,10E)-geranyllinalool + diphosphate. It carries out the reaction (2E)-geranyl diphosphate + H2O = (S)-linalool + diphosphate. It participates in secondary metabolite biosynthesis; terpenoid biosynthesis. Its function is as follows. Involved in sesquiterpene (C15), diterpene (C20) and monoterpene (C10) biosynthesis. Has sesquiterpene synthase activity, converting farnesyl diphosphate to nerolidol, the precursor of the volatile C11-homoterpene (E)-3,8-dimethyl-1,4,7-nonatriene (DMNT). Has diterpene synthase activity, converting geranylgeranyl diphosphate to (E,E)-geranyllinalool, the precursor of the volatile C16-homoterpene (E,E)-4,8,12-trimethyltrideca 1,3,7,11-tetraene (TMTT). Has monoterpene synthase activity, converting geranyl diphosphate into linalool. Forms only the S-isomers of the three tertiary terpene alcohols. In Zea mays (Maize), this protein is Terpene synthase 2, chloroplastic.